A 179-amino-acid chain; its full sequence is Peptidyl-tRNA hydrolase (179 aa).

A tRNA-binding site is contributed by Y15. Catalysis depends on H20, which acts as the Proton acceptor. TRNA contacts are provided by Y66, N68, and N114.

It belongs to the PTH family. As to quaternary structure, monomer.

It is found in the cytoplasm. It carries out the reaction an N-acyl-L-alpha-aminoacyl-tRNA + H2O = an N-acyl-L-amino acid + a tRNA + H(+). In terms of biological role, hydrolyzes ribosome-free peptidyl-tRNAs (with 1 or more amino acids incorporated), which drop off the ribosome during protein synthesis, or as a result of ribosome stalling. Functionally, catalyzes the release of premature peptidyl moieties from peptidyl-tRNA molecules trapped in stalled 50S ribosomal subunits, and thus maintains levels of free tRNAs and 50S ribosomes. In Chlamydia trachomatis serovar L2 (strain ATCC VR-902B / DSM 19102 / 434/Bu), this protein is Peptidyl-tRNA hydrolase.